A 380-amino-acid chain; its full sequence is Flap endonuclease 1 (380 aa).

The tract at residues 1 to 104 is N-domain; the sequence is MGIQGLAKLI…GELAKRSERR (104 aa). R19 carries the symmetric dimethylarginine; by PRMT5 modification. A Mg(2+)-binding site is contributed by D34. Residues R47 and R70 each coordinate DNA. K80 carries the post-translational modification N6-acetyllysine. Mg(2+) is bound at residue D86. A symmetric dimethylarginine; by PRMT5 mark is found at R100 and R104. The tract at residues 122–253 is I-domain; it reads EVEKFTKRLV…KRAVDLIQKH (132 aa). E158, E160, D179, and D181 together coordinate Mg(2+). E158 is a binding site for DNA. S187 carries the phosphoserine; by CDK2 modification. R192 carries the symmetric dimethylarginine; by PRMT5 modification. S197 carries the post-translational modification Phosphoserine. Residues G231 and D233 each contribute to the DNA site. Mg(2+) is bound at residue D233. Phosphoserine occurs at positions 255, 293, and 335. The disordered stretch occupies residues 327-380; that stretch reads RLSKSRQGSTQGRLDDFFKVTGSLSSAKRKEPEPKGAAKKKAKTGAAGKFKRGK. Position 336 is a phosphothreonine (T336). The segment at 336–344 is interaction with PCNA; it reads TQGRLDDFF. An N6-acetyllysine mark is found at K354, K375, K377, and K380. Basic residues predominate over residues 363-380; sequence AAKKKAKTGAAGKFKRGK.

Belongs to the XPG/RAD2 endonuclease family. FEN1 subfamily. As to quaternary structure, interacts with PCNA. Three molecules of FEN1 bind to one PCNA trimer with each molecule binding to one PCNA monomer. PCNA stimulates the nuclease activity without altering cleavage specificity. The C-terminal domain binds EP300; can bind simultaneously to both PCNA and EP300. Interacts with DDX11; this interaction is direct and increases flap endonuclease activity of FEN1. Interacts with WDR4; regulating its endonuclease activity. Interacts with POLB. Mg(2+) serves as cofactor. Post-translationally, acetylated by EP300. Acetylation inhibits both endonuclease and exonuclease activity. Acetylation also reduces DNA-binding activity but does not affect interaction with PCNA or EP300. Phosphorylation upon DNA damage induces relocalization to the nuclear plasma. Phosphorylation at Ser-187 by CDK2 occurs during late S-phase and results in dissociation from PCNA. In terms of processing, methylation at Arg-192 by PRMT5 impedes Ser-187 phosphorylation and increases interaction with PCNA.

It localises to the nucleus. The protein resides in the nucleolus. Its subcellular location is the nucleoplasm. The protein localises to the mitochondrion. Structure-specific nuclease with 5'-flap endonuclease and 5'-3' exonuclease activities involved in DNA replication and repair. During DNA replication, cleaves the 5'-overhanging flap structure that is generated by displacement synthesis when DNA polymerase encounters the 5'-end of a downstream Okazaki fragment. It enters the flap from the 5'-end and then tracks to cleave the flap base, leaving a nick for ligation. Also involved in the long patch base excision repair (LP-BER) pathway, by cleaving within the apurinic/apyrimidinic (AP) site-terminated flap. Acts as a genome stabilization factor that prevents flaps from equilibrating into structures that lead to duplications and deletions. Also possesses 5'-3' exonuclease activity on nicked or gapped double-stranded DNA, and exhibits RNase H activity. Also involved in replication and repair of rDNA and in repairing mitochondrial DNA. The protein is Flap endonuclease 1 of Bos taurus (Bovine).